A 768-amino-acid chain; its full sequence is Cullin-3-A (768 aa).

The segment at 677 to 698 (VAAKQGESDPERKETRQKVDDD) is disordered. The span at 682–698 (GESDPERKETRQKVDDD) shows a compositional bias: basic and acidic residues. The Cullin neddylation domain occupies 698-760 (DRKHEIEAAI…REYLARTPED (63 aa)). A Glycyl lysine isopeptide (Lys-Gly) (interchain with G-Cter in NEDD8) cross-link involves residue K712.

The protein belongs to the cullin family. In terms of assembly, component of multiple BCR (BTB-CUL3-RBX1) E3 ubiquitin-protein ligase complexes formed of cul3, rbx1 and a variable BTB domain-containing protein acting as both, adapter to cullin and substrate recognition subunit. Interacts with btbd6. Neddylated. Attachment of NEDD8 is required for the E3 ubiquitin-protein ligase activity of the SCF-like complex.

Its subcellular location is the nucleus. Its pathway is protein modification; protein ubiquitination. Functionally, probable core component of cullin-based SCF-like E3 ubiquitin-protein ligase complexes which mediate the ubiquitination and subsequent proteasomal degradation of target proteins. The E3 ubiquitin-protein ligase activity of the complex is dependent on the neddylation of the cullin subunit. Involved in ER-Golgi transport by regulating the size of COPII coats, thereby playing a key role in collagen export, which is required for embryonic stem (ES) cells division. May play a role in the regulation of mittotic entry via ubiquitination of aurka. The sequence is that of Cullin-3-A (cul3a) from Xenopus laevis (African clawed frog).